Here is a 752-residue protein sequence, read N- to C-terminus: Iron-sulfur clusters transporter ABCB7, mitochondrial (752 aa).

Residues 1-22 (MALLAIHSWRWAAAAVAFEKHK) constitute a mitochondrion transit peptide. At 23–140 (HSAVLTRSLV…KDRPDLRARV (118 aa)) the chain is on the mitochondrial matrix side. Residues 140–436 (VAISLGFLGG…LGTVYRETRQ (297 aa)) enclose the ABC transmembrane type-1 domain. Residues 141-161 (AISLGFLGGAKAMNIVVPFMF) traverse the membrane as a helical segment. Over 162 to 185 (KYAVDSLNQMSGNMLNLSDAPNTV) the chain is Mitochondrial intermembrane. Residues 186–206 (ATMATAVLIGYGVSRAGAAFF) form a helical membrane-spanning segment. Residues 207-259 (NEVRNAVFGKVAQNSIRRIAKNVFLHLHNLDLGFHLSRQTGALSKAIDRGTRG) lie on the Mitochondrial matrix side of the membrane. An N6-acetyllysine mark is found at Lys216 and Lys251. Residues 260–280 (ISFVLSALVFNLLPIVFEMTL) traverse the membrane as a helical segment. Topologically, residues 281-290 (VSSVLYYKCG) are mitochondrial intermembrane. The helical transmembrane segment at 291–311 (AQFALVTLGTLGAYTAFTVAV) threads the bilayer. Over 312 to 382 (TRWRTRFRIE…TLAMLNFGQS (71 aa)) the chain is Mitochondrial matrix. Residue 315–319 (RTRFR) coordinates glutathione. Ser336 carries the post-translational modification Phosphoserine. Phosphotyrosine is present on Tyr340. Residue Thr342 is modified to Phosphothreonine. At Lys350 the chain carries N6-acetyllysine. 378–381 (NFGQ) contributes to the glutathione binding site. Residues 383–403 (AIFSVGLTAIMVLASQGIVAG) traverse the membrane as a helical segment. The Mitochondrial intermembrane segment spans residues 404-409 (ALTVGD). A helical transmembrane segment spans residues 410 to 430 (LVMVNGLLFQLSLPLNFLGTV). Gly428 is a glutathione binding site. Residues 431–752 (YRETRQALID…SVKGCGNCSC (322 aa)) are Mitochondrial matrix-facing. One can recognise an ABC transporter domain in the interval 472–706 (VAFDNVHFEY…SSSIYSEMWH (235 aa)). Residues Tyr481 and 505-516 (GGSGSGKSTIVR) contribute to the ATP site.

Belongs to the ABC transporter superfamily. ABCB family. Heavy Metal importer (TC 3.A.1.210) subfamily. As to quaternary structure, homodimer or heterodimer. Interacts with C10orf88/PAAT. Forms a complex with ABCB10 and FECH, where a dimeric FECH bridges ABCB7 and ABCB10 homodimers; this complex may be required for cellular iron homeostasis, mitochondrial function and heme biosynthesis. Interacts with FECH. Interacts with ATP5F1A. Interacts with COX4I1; this interaction allows the regulation of cellular iron homeostasis and cellular reactive oxygen species (ROS) levels in cardiomyocytes.

Its subcellular location is the mitochondrion inner membrane. It catalyses the reaction (glutathione)4[2Fe(III)-2S] cluster(in) + ATP + H2O = (glutathione)4[2Fe(III)-2S] cluster(out) + ADP + phosphate + H(+). Its function is as follows. Exports glutathione-coordinated iron-sulfur clusters such as [2Fe-2S]-(GS)4 cluster from the mitochondria to the cytosol in an ATP-dependent manner allowing the assembly of the cytosolic iron-sulfur (Fe/S) cluster-containing proteins and participates in iron homeostasis. Moreover, through a functional complex formed of ABCB7, FECH and ABCB10, also plays a role in the cellular iron homeostasis, mitochondrial function and heme biosynthesis. In cardiomyocytes, regulates cellular iron homeostasis and cellular reactive oxygen species (ROS) levels through its interaction with COX4I1. May also play a role in hematopoiesis. The sequence is that of Iron-sulfur clusters transporter ABCB7, mitochondrial from Rattus norvegicus (Rat).